Consider the following 159-residue polypeptide: ATP synthase subunit b (159 aa).

The chain crosses the membrane as a helical span at residues 7–27 (TFVWTIINFLLLLVVLSYFLF).

Belongs to the ATPase B chain family. F-type ATPases have 2 components, F(1) - the catalytic core - and F(0) - the membrane proton channel. F(1) has five subunits: alpha(3), beta(3), gamma(1), delta(1), epsilon(1). F(0) has three main subunits: a(1), b(2) and c(10-14). The alpha and beta chains form an alternating ring which encloses part of the gamma chain. F(1) is attached to F(0) by a central stalk formed by the gamma and epsilon chains, while a peripheral stalk is formed by the delta and b chains.

The protein resides in the cell membrane. F(1)F(0) ATP synthase produces ATP from ADP in the presence of a proton or sodium gradient. F-type ATPases consist of two structural domains, F(1) containing the extramembraneous catalytic core and F(0) containing the membrane proton channel, linked together by a central stalk and a peripheral stalk. During catalysis, ATP synthesis in the catalytic domain of F(1) is coupled via a rotary mechanism of the central stalk subunits to proton translocation. Its function is as follows. Component of the F(0) channel, it forms part of the peripheral stalk, linking F(1) to F(0). The chain is ATP synthase subunit b from Clostridium novyi (strain NT).